The sequence spans 367 residues: 4-hydroxy-3-methylbut-2-en-1-yl diphosphate synthase (flavodoxin) (367 aa).

Cys-265, Cys-268, Cys-300, and Glu-307 together coordinate [4Fe-4S] cluster.

Belongs to the IspG family. Requires [4Fe-4S] cluster as cofactor.

It catalyses the reaction (2E)-4-hydroxy-3-methylbut-2-enyl diphosphate + oxidized [flavodoxin] + H2O + 2 H(+) = 2-C-methyl-D-erythritol 2,4-cyclic diphosphate + reduced [flavodoxin]. The protein operates within isoprenoid biosynthesis; isopentenyl diphosphate biosynthesis via DXP pathway; isopentenyl diphosphate from 1-deoxy-D-xylulose 5-phosphate: step 5/6. In terms of biological role, converts 2C-methyl-D-erythritol 2,4-cyclodiphosphate (ME-2,4cPP) into 1-hydroxy-2-methyl-2-(E)-butenyl 4-diphosphate. This chain is 4-hydroxy-3-methylbut-2-en-1-yl diphosphate synthase (flavodoxin), found in Bacillus anthracis.